The chain runs to 190 residues: dCTP deaminase, dUMP-forming (190 aa).

DCTP-binding positions include 101–106 (KSSLGR), aspartate 119, 127–129 (TLE), glutamine 148, tyrosine 162, and glutamine 174. Residue glutamate 129 is the Proton donor/acceptor of the active site. The interval 161 to 190 (PYGSSGVGSKYQGQRGPTPSRSYQNFIRST) is disordered. Residues 171-190 (YQGQRGPTPSRSYQNFIRST) are compositionally biased toward polar residues.

The protein belongs to the dCTP deaminase family. In terms of assembly, homotrimer.

It carries out the reaction dCTP + 2 H2O = dUMP + NH4(+) + diphosphate. It participates in pyrimidine metabolism; dUMP biosynthesis; dUMP from dCTP: step 1/1. Its function is as follows. Bifunctional enzyme that catalyzes both the deamination of dCTP to dUTP and the hydrolysis of dUTP to dUMP without releasing the toxic dUTP intermediate. This chain is dCTP deaminase, dUMP-forming, found in Mycobacterium ulcerans (strain Agy99).